Reading from the N-terminus, the 335-residue chain is Holliday junction branch migration complex subunit RuvB (335 aa).

The segment at 1-183 (MDERIISSET…FGVIDHLEFY (183 aa)) is large ATPase domain (RuvB-L). ATP-binding positions include Leu-22, Arg-23, Gly-64, Lys-67, Thr-68, Thr-69, 130–132 (EDY), Arg-173, Tyr-183, and Arg-220. Position 68 (Thr-68) interacts with Mg(2+). Positions 184 to 254 (TEEQLTEIVL…LAKEALTLLQ (71 aa)) are small ATPAse domain (RuvB-S). Positions 257 to 335 (PRGLDTIDQK…HLGISYEKEV (79 aa)) are head domain (RuvB-H). Residues Arg-293, Arg-312, and Arg-317 each contribute to the DNA site.

It belongs to the RuvB family. Homohexamer. Forms an RuvA(8)-RuvB(12)-Holliday junction (HJ) complex. HJ DNA is sandwiched between 2 RuvA tetramers; dsDNA enters through RuvA and exits via RuvB. An RuvB hexamer assembles on each DNA strand where it exits the tetramer. Each RuvB hexamer is contacted by two RuvA subunits (via domain III) on 2 adjacent RuvB subunits; this complex drives branch migration. In the full resolvosome a probable DNA-RuvA(4)-RuvB(12)-RuvC(2) complex forms which resolves the HJ.

It localises to the cytoplasm. The enzyme catalyses ATP + H2O = ADP + phosphate + H(+). The RuvA-RuvB-RuvC complex processes Holliday junction (HJ) DNA during genetic recombination and DNA repair, while the RuvA-RuvB complex plays an important role in the rescue of blocked DNA replication forks via replication fork reversal (RFR). RuvA specifically binds to HJ cruciform DNA, conferring on it an open structure. The RuvB hexamer acts as an ATP-dependent pump, pulling dsDNA into and through the RuvAB complex. RuvB forms 2 homohexamers on either side of HJ DNA bound by 1 or 2 RuvA tetramers; 4 subunits per hexamer contact DNA at a time. Coordinated motions by a converter formed by DNA-disengaged RuvB subunits stimulates ATP hydrolysis and nucleotide exchange. Immobilization of the converter enables RuvB to convert the ATP-contained energy into a lever motion, pulling 2 nucleotides of DNA out of the RuvA tetramer per ATP hydrolyzed, thus driving DNA branch migration. The RuvB motors rotate together with the DNA substrate, which together with the progressing nucleotide cycle form the mechanistic basis for DNA recombination by continuous HJ branch migration. Branch migration allows RuvC to scan DNA until it finds its consensus sequence, where it cleaves and resolves cruciform DNA. This is Holliday junction branch migration complex subunit RuvB from Listeria innocua serovar 6a (strain ATCC BAA-680 / CLIP 11262).